Reading from the N-terminus, the 106-residue chain is Small ribosomal subunit protein uS17 (106 aa).

The protein belongs to the universal ribosomal protein uS17 family. Part of the 30S ribosomal subunit.

In terms of biological role, one of the primary rRNA binding proteins, it binds specifically to the 5'-end of 16S ribosomal RNA. The chain is Small ribosomal subunit protein uS17 from Methanosphaera stadtmanae (strain ATCC 43021 / DSM 3091 / JCM 11832 / MCB-3).